The following is a 158-amino-acid chain: Secreted RxLR effector protein 131 (158 aa).

The N-terminal stretch at 1–20 (MRQIPLVVVLLLAYAARLQG) is a signal peptide. The RxLR-dEER motif lies at 39–57 (RDLDGSTTSMSVNVDDEER). The segment at 120–158 (KGNVKYLAIIYVICILSVLGILGTVFAINRNISNQYIHE) is host BKI1-binding. The chain crosses the membrane as a helical span at residues 127–147 (AIIYVICILSVLGILGTVFAI). The N-linked (GlcNAc...) asparagine glycan is linked to Asn150.

Belongs to the RxLR effector family. Interacts with host BKI1.

It localises to the secreted. The protein resides in the host cell membrane. Secreted effector that suppresses pathogen-associated molecular pattern (PAMP)-triggered immunity (PTI) in host plants. Suppresses both defense-related brassinosteroid (BR) and ERECTA (ER) signaling pathways in planta by interacting with host BRI1 kinase inhibitor 1 (BKI1) at the host plasma membrane, leading to a host dwarf phenotype. The chain is Secreted RxLR effector protein 131 from Plasmopara viticola (Downy mildew of grapevine).